Here is a 126-residue protein sequence, read N- to C-terminus: Small ribosomal subunit protein uS11 (126 aa).

It belongs to the universal ribosomal protein uS11 family. In terms of assembly, part of the 30S ribosomal subunit.

Located on the platform of the 30S subunit. This Methanosarcina mazei (strain ATCC BAA-159 / DSM 3647 / Goe1 / Go1 / JCM 11833 / OCM 88) (Methanosarcina frisia) protein is Small ribosomal subunit protein uS11.